A 241-amino-acid chain; its full sequence is Eukaryotic translation initiation factor 3 subunit J (241 aa).

Positions 1–27 (MEEDWEQHGEKEEVPLPAKKPDANKWD) are enriched in basic and acidic residues. The disordered stretch occupies residues 1–99 (MEEDWEQHGE…ENMTPEQKLA (99 aa)). The span at 28–45 (GEDEEEEVKDSWEDEDEL) shows a compositional bias: acidic residues. The stretch at 31–119 (EEEEVKDSWE…ESDLKNALDT (89 aa)) forms a coiled coil. Basic and acidic residues-rich tracts occupy residues 46 to 58 (EEKK…ETPK) and 69 to 90 (IVEK…KEAE).

The protein belongs to the eIF-3 subunit J family. Component of the eukaryotic translation initiation factor 3 (eIF-3) complex.

The protein resides in the cytoplasm. Its function is as follows. Component of the eukaryotic translation initiation factor 3 (eIF-3) complex, which is involved in protein synthesis of a specialized repertoire of mRNAs and, together with other initiation factors, stimulates binding of mRNA and methionyl-tRNAi to the 40S ribosome. The eIF-3 complex specifically targets and initiates translation of a subset of mRNAs involved in cell proliferation. The polypeptide is Eukaryotic translation initiation factor 3 subunit J (Culex quinquefasciatus (Southern house mosquito)).